The following is a 101-amino-acid chain: Small ribosomal subunit protein uS14 (101 aa).

It belongs to the universal ribosomal protein uS14 family. In terms of assembly, part of the 30S ribosomal subunit. Contacts proteins S3 and S10.

In terms of biological role, binds 16S rRNA, required for the assembly of 30S particles and may also be responsible for determining the conformation of the 16S rRNA at the A site. The sequence is that of Small ribosomal subunit protein uS14 from Chelativorans sp. (strain BNC1).